Consider the following 504-residue polypeptide: 2,3-bisphosphoglycerate-independent phosphoglycerate mutase (504 aa).

Positions 11 and 61 each coordinate Mn(2+). The active-site Phosphoserine intermediate is S61. Substrate-binding positions include H122, 152–153, R183, R189, 255–258, and K329; these read RD and RNDR. The Mn(2+) site is built by D396, H400, D437, H438, and H455.

Belongs to the BPG-independent phosphoglycerate mutase family. Monomer. It depends on Mn(2+) as a cofactor.

It carries out the reaction (2R)-2-phosphoglycerate = (2R)-3-phosphoglycerate. The protein operates within carbohydrate degradation; glycolysis; pyruvate from D-glyceraldehyde 3-phosphate: step 3/5. Functionally, catalyzes the interconversion of 2-phosphoglycerate and 3-phosphoglycerate. This Bacteroides fragilis (strain ATCC 25285 / DSM 2151 / CCUG 4856 / JCM 11019 / LMG 10263 / NCTC 9343 / Onslow / VPI 2553 / EN-2) protein is 2,3-bisphosphoglycerate-independent phosphoglycerate mutase.